Reading from the N-terminus, the 586-residue chain is A-type ATP synthase subunit A (586 aa).

Glycine 238–threonine 245 is a binding site for ATP.

It belongs to the ATPase alpha/beta chains family. Has multiple subunits with at least A(3), B(3), C, D, E, F, H, I and proteolipid K(x).

The protein localises to the cell membrane. The catalysed reaction is ATP + H2O + 4 H(+)(in) = ADP + phosphate + 5 H(+)(out). Functionally, component of the A-type ATP synthase that produces ATP from ADP in the presence of a proton gradient across the membrane. The A chain is the catalytic subunit. The chain is A-type ATP synthase subunit A from Haloferax volcanii (strain ATCC 29605 / DSM 3757 / JCM 8879 / NBRC 14742 / NCIMB 2012 / VKM B-1768 / DS2) (Halobacterium volcanii).